We begin with the raw amino-acid sequence, 134 residues long: MSAQSLEVGQKARLSKRFGAAEVAAFAALSEDFNPLHLDPAFAATTAFERPIVHGMLLASLFSGLLGQQLPGKGSIYLGQSLSFKLPVFVGDEVTAEVEVTALREDKPIATLTTRIFTQGGALAVTGEAVVKLP.

One can recognise a MaoC-like domain in the interval 5–119 (SLEVGQKARL…ATLTTRIFTQ (115 aa)). Residues 32 to 37 (DFNPLH), Gly-55, and Phe-84 each bind a (3R)-3-hydroxyacyl-CoA.

Homodimer.

The catalysed reaction is a (3R)-3-hydroxyacyl-CoA = a (2E)-enoyl-CoA + H2O. Functionally, catalyzes the hydration of trans-2-enoyl-CoA with a chain-length of 4-6 carbon atoms, forming the corresponding (3R)-3-hydroxyacyl-CoA. In Aeromonas caviae (Aeromonas punctata), this protein is (R)-specific enoyl-CoA hydratase (phaJ).